An 862-amino-acid polypeptide reads, in one-letter code: Transcription initiation factor TFIID subunit 4B (862 aa).

The segment at 100 to 241 (NTTTIQFPAN…TPSNEPNLKA (142 aa)) is sufficient for interaction with ZNF628. A compositionally biased stretch (polar residues) spans 219–237 (VTTLKPSSLGASSTPSNEP). The tract at residues 219–239 (VTTLKPSSLGASSTPSNEPNL) is disordered. Positions 256–353 (LENVKKCKNF…CVQQTSSDMV (98 aa)) constitute a TAFH domain. Residues 511-533 (PGPVLSQPAGIPQAVQVKQLVVQ) form a required for interaction with P65/RELA region. Residues 516–556 (SQPAGIPQAVQVKQLVVQQPSGGNEKQVTTISHSSTLTIQK) carry the Nuclear export signal motif. Serine 595 carries the post-translational modification Phosphoserine. Positions 653–702 (PFLFIGALQKRILDIGKKHDITELNSDAVNLISQATQERLRGLLEKLTAI) constitute a Histone-fold domain. A coiled-coil region spans residues 722 to 787 (TRSQLKFLEK…LAQIQHRDAN (66 aa)). The interval 830–862 (PRITRICLRDLIFCMEQEREMKYSRALYLALLK) is required for interaction with TAF12.

This sequence belongs to the TAF4 family. TFIID is composed of TATA binding protein (TBP) and a number of TBP-associated factors (TAFs). Heterodimerizes with TAF12/TFII20 via the C-terminal H2A-like histone-fold domain. This heterodimer forms a histone-like octamer with the TAF6/TAFII70-TAF9/TAFII31 heterodimer. Interacts with P65/RELA homodimers and P65/RELA-REL heterodimers. Interaction with POU2AF1, via its C-terminal activation domain, is required for octamer-dependent transcription. Interacts with ZNF628. In terms of processing, under stimulation by forskolin, Isoform 1 is phosphorylated by protein kinase A (PKA). Preferentially expressed in ovarian granulosa cells (at protein level). Highly expressed in B-cells.

The protein resides in the nucleus. Its subcellular location is the cytoplasm. In terms of biological role, cell type-specific subunit of the general transcription factor TFIID that may function as a gene-selective coactivator in certain cells. TFIID is a multimeric protein complex that plays a central role in mediating promoter responses to various activators and repressors. TAF4B is a transcriptional coactivator of the p65/RELA NF-kappa-B subunit. Involved in the activation of a subset of antiapoptotic genes including TNFAIP3. May be involved in regulating folliculogenesis. Through interaction with OCBA/POU2AF1, acts as a coactivator of B-cell-specific transcription. Plays a role in spermiogenesis and oogenesis. The chain is Transcription initiation factor TFIID subunit 4B (TAF4B) from Homo sapiens (Human).